The chain runs to 480 residues: Cytochrome P450 724B1 (480 aa).

The chain crosses the membrane as a helical span at residues 6–26; that stretch reads LVLAALVILLALLLTLVLSHF. Position 426 (Cys426) interacts with heme.

It belongs to the cytochrome P450 family. Heme is required as a cofactor. Ubiquitously expressed at low levels, but preferentially in the internodes and the florets before flowering.

The protein resides in the membrane. The catalysed reaction is campesterol + reduced [NADPH--hemoprotein reductase] + O2 = (22S)-22-hydroxycampesterol + oxidized [NADPH--hemoprotein reductase] + H2O + H(+). It participates in plant hormone biosynthesis; brassinosteroid biosynthesis. Involved in brassinosteroid biosynthesis. May catalyze a C6-oxidation step and may be involved to supply 6-deoxotyphasterol and typhasterol. Involved in internode elongation and seed development. Catalyzes the conversion of campesterol (CR) to (22S)-22-hydroxycampesterol (22-OHCR, 22-hydroxyCR). The protein is Cytochrome P450 724B1 of Oryza sativa subsp. japonica (Rice).